A 172-amino-acid polypeptide reads, in one-letter code: Trypsin inhibitor 1A (172 aa).

2 disulfide bridges follow: cysteine 40/cysteine 84 and cysteine 133/cysteine 139.

Belongs to the protease inhibitor I3 (leguminous Kunitz-type inhibitor) family.

In terms of biological role, WTI-1B inhibits trypsin stoichiometrically. This is Trypsin inhibitor 1A from Psophocarpus tetragonolobus (Winged bean).